The primary structure comprises 201 residues: Small ribosomal subunit protein uS4c (201 aa).

The 64-residue stretch at 89 to 152 folds into the S4 RNA-binding domain; sequence MRLDNILFRL…NSRTLVQNLL (64 aa).

It belongs to the universal ribosomal protein uS4 family. Part of the 30S ribosomal subunit. Contacts protein S5. The interaction surface between S4 and S5 is involved in control of translational fidelity.

It localises to the plastid. The protein localises to the chloroplast. Functionally, one of the primary rRNA binding proteins, it binds directly to 16S rRNA where it nucleates assembly of the body of the 30S subunit. With S5 and S12 plays an important role in translational accuracy. In Capsella bursa-pastoris (Shepherd's purse), this protein is Small ribosomal subunit protein uS4c (rps4).